Consider the following 145-residue polypeptide: Large ribosomal subunit protein uL11 (145 aa).

Belongs to the universal ribosomal protein uL11 family. Part of the ribosomal stalk of the 50S ribosomal subunit. Interacts with L10 and the large rRNA to form the base of the stalk. L10 forms an elongated spine to which L12 dimers bind in a sequential fashion forming a multimeric L10(L12)X complex. One or more lysine residues are methylated.

Functionally, forms part of the ribosomal stalk which helps the ribosome interact with GTP-bound translation factors. The protein is Large ribosomal subunit protein uL11 of Rickettsia massiliae (strain Mtu5).